The chain runs to 292 residues: General transcription factor IIE subunit 2 (292 aa).

Methionine 1 carries the post-translational modification N-acetylmethionine. Residues 17 to 64 form a disordered region; the sequence is LSTPVVEKRAVPSESPSSSSSKKKKAKVEHGGSSGSKQNSDHNNGSFN. Over residues 51-63 the composition is skewed to polar residues; sequence GSKQNSDHNNGSF. Position 62 is a phosphoserine (serine 62). Positions 67-147 form a DNA-binding region, TFIIE beta; it reads ALSGSSGYKF…YAFKPKYNLK (81 aa). Lysine 75 carries the N6-acetyllysine modification. Residues 245-277 form a disordered region; that stretch reads SMQESGPKKVASIQRRKKPASQKKRRFKTHNEH. A compositionally biased stretch (basic residues) spans 258 to 272; it reads QRRKKPASQKKRRFK.

The protein belongs to the TFIIE beta subunit family. As to quaternary structure, tetramer of two alpha and two beta chains. Interacts with FACT subunit SUPT16H. Interacts with ATF7IP. Interacts with SND1. Part of TBP-based Pol II pre-initiation complex (PIC), in which Pol II core assembles with general transcription factors and other specific initiation factors including GTF2E1, GTF2E2, GTF2F1, GTF2F2, TCEA1, ERCC2, ERCC3, GTF2H2, GTF2H3, GTF2H4, GTF2H5, GTF2A1, GTF2A2, GTF2B and TBP; this large multi-subunit PIC complex mediates DNA unwinding and targets Pol II core to the transcription start site where the first phosphodiester bond forms.

Its subcellular location is the nucleus. Recruits TFIIH to the initiation complex and stimulates the RNA polymerase II C-terminal domain kinase and DNA-dependent ATPase activities of TFIIH. Both TFIIH and TFIIE are required for promoter clearance by RNA polymerase. In Mus musculus (Mouse), this protein is General transcription factor IIE subunit 2 (Gtf2e2).